The chain runs to 219 residues: GPI ethanolamine phosphate transferase, stabilizing subunit (219 aa).

The next 6 membrane-spanning stretches (helical) occupy residues tyrosine 11–leucine 31, threonine 42–valine 62, tyrosine 86–isoleucine 106, phenylalanine 113–proline 133, leucine 155–leucine 175, and threonine 189–tryptophan 209.

It belongs to the PIGF family. Part of the ethanolamine phosphate transferase 3 complex composed by PIGO and PIGF. Part of the ethanolamine phosphate transferase 2 complex with PIGG. PIGF is required to stabilize PIGG and PIGO.

It is found in the endoplasmic reticulum membrane. Its pathway is glycolipid biosynthesis; glycosylphosphatidylinositol-anchor biosynthesis. Its function is as follows. Stabilizing subunit of the ethanolamine phosphate transferase 3 and ethanolamine phosphate transferase 2 complexes that sequentially transfer an ethanolamine phosphate (EtNP) from a phosphatidylethanolamine (PE) to the 6-OH position of the third alpha-1,2-linked mannose and the second alpha-1,6-linked mannose of the alpha-D-Man-(1-&gt;2)-alpha-D-Man-(1-&gt;6)-2-PEtn-alpha-D-Man-(1-&gt;4)-alpha-D-GlcN-(1-&gt;6)-(1-radyl,2-acyl-sn-glycero-3-phospho)-2-acyl-inositol (also termed H6) intermediate to generate a 6-PEtn-alpha-D-Man-(1-&gt;2)-6-PEtn-alpha-D-Man-(1-&gt;6)-2-PEtn-alpha-D-Man-(1-&gt;4)-alpha-D-GlcN-(1-&gt;6)-(1-radyl,2-acyl-sn-glycero-3-phospho)-2-acyl-inositol (also termed H8). Participates in the tenth and eleventh steps of the glycosylphosphatidylinositol-anchor biosynthesis, in association with PIGO and PIGG, respectively. The chain is GPI ethanolamine phosphate transferase, stabilizing subunit from Homo sapiens (Human).